A 129-amino-acid chain; its full sequence is Putative protein p14 (129 aa).

The polypeptide is Putative protein p14 (14) (Acyrthosiphon pisum secondary endosymbiont phage 1 (Bacteriophage APSE-1)).